The following is a 2598-amino-acid chain: Partially reducing polyketide synthase men1 (2598 aa).

Residues 7–435 (SQSIAIVGLS…GSNAHAILDD (429 aa)) enclose the Ketosynthase family 3 (KS3) domain. Active-site for beta-ketoacyl synthase activity residues include Cys181, His316, and His358. Residues 450-459 (GKSHHHHHQH) are compositionally biased toward basic residues. Disordered regions lie at residues 450–490 (GKSH…NGTT) and 537–557 (AEKQ…DPEK). Positions 474 to 490 (VNGTSEVNGTSGVNGTT) are enriched in low complexity. The region spanning 611–915 (YVFTGQGAQW…RGPVTQILQS (305 aa)) is the Malonyl-CoA:ACP transacylase (MAT) domain. The N-terminal hotdog fold stretch occupies residues 1008–1151 (LGLIGAPMPN…GSVAVEFGAL (144 aa)). Residues 1008–1325 (LGLIGAPMPN…CVEMPSASGM (318 aa)) enclose the PKS/mFAS DH domain. The dehydratase (DH) domain stretch occupies residues 1009-1323 (GLIGAPMPNF…LVCVEMPSAS (315 aa)). The C-terminal hotdog fold stretch occupies residues 1169–1325 (TISQEVDVFY…CVEMPSASGM (157 aa)). An Enoyl reductase (ER) domain is found at 1886 to 2197 (GMLNTLCFEI…ARSRQDKIVI (312 aa)). Residues 2222 to 2399 (TYLIAGGLGG…AATIDLGIVK (178 aa)) enclose the Ketoreductase (KR) domain. A Carrier domain is found at 2510 to 2587 (EAARLVSAAV…AFASDLAKKG (78 aa)). Ser2547 carries the O-(pantetheine 4'-phosphoryl)serine modification.

It depends on pantetheine 4'-phosphate as a cofactor.

The protein operates within secondary metabolite biosynthesis. Partially reducing polyketide synthase; part of the gene cluster that mediates the biosynthesis of menisporopsin A, a bioactive macrocyclic polylactone. The biosynthesis of menisporopsin A is performed by a reducing (man1) and a non-reducing (men2) polyketide synthase that catalyze the formation of each menisporopsin A subunits, while the esterification and cyclolactonization activities are probably peformed by the unusual thioesterase domain of men2. First, a reduced diketide intermediate, 3-hydroxybutyryl-S-ACP is produced by men1 and transferred to men2; this is followed by a second reduced diketide which is further elongated using 3 units of malonyl-coA to form a reduced pentaketide. The cyclization of this intermediate by the PT domain forms the second subunit, 2,4-dihydroxy-6-(2-hydroxy-n-propyl)benzoyl-S-ACP. The TE domain of men2 then esterifies the secondary hydroxyl group on the side chain of the second subunit with the acyl-TE of the first subunit to form the first ester intermediate. This process occurs iteratively to form a linear tetraester intermediate. The final subunit is formed by a similar process, except that an extra malonyl-CoA is required in an additional elongation step to form a reduced hexaketide intermediate, and the carbonyl group next to the secondary hydroxyl group is reduced by a trans-acting ketoreductase. Again, the PT domain catalyzes cyclization to form the largest subunit, 2,4-dihydroxy-6-(2,4-dihydroxy-n-pentyl) benzoyl-S-ACP. Then the linear pentaester intermediate is formed. In this step, if the intermediate transfer rate is slow, intra- molecular cyclization involving the secondary hydroxyl group of the pentaester intermediate may occur to form menisporopsin B. Alternatively, transfer of the pentaester intermediate to the TE domain would allow cyclolactonization to be catalyzed by the TE to form menisporopsin A. The polypeptide is Partially reducing polyketide synthase men1 (Menisporopsis theobromae).